The primary structure comprises 430 residues: Endo-beta-1,4-glucanase celB (430 aa).

Residues 1–16 (MALLLSLSLLATTISA) form the signal peptide. N-linked (GlcNAc...) asparagine glycans are attached at residues asparagine 43 and asparagine 153. Glutamate 216 acts as the Nucleophile in catalysis. Glutamate 221 serves as the catalytic Proton donor. N-linked (GlcNAc...) asparagine glycosylation is present at asparagine 395.

This sequence belongs to the glycosyl hydrolase 7 (cellulase C) family.

It is found in the secreted. The enzyme catalyses Endohydrolysis of (1-&gt;4)-beta-D-glucosidic linkages in cellulose, lichenin and cereal beta-D-glucans.. Its function is as follows. Has endoglucanase activity on substrates containing beta-1,4 glycosidic bonds, like in carboxymethylcellulose (CMC), hydroxyethylcellulose (HEC) and beta-glucan. Involved in the degradation of complex natural cellulosic substrates. In Emericella nidulans (strain FGSC A4 / ATCC 38163 / CBS 112.46 / NRRL 194 / M139) (Aspergillus nidulans), this protein is Endo-beta-1,4-glucanase celB (celB).